The chain runs to 264 residues: Hydroxyethylthiazole kinase (264 aa).

Met-47 serves as a coordination point for substrate. Residues Arg-123 and Ser-169 each coordinate ATP. Gly-196 lines the substrate pocket.

It belongs to the Thz kinase family. Requires Mg(2+) as cofactor.

It carries out the reaction 5-(2-hydroxyethyl)-4-methylthiazole + ATP = 4-methyl-5-(2-phosphooxyethyl)-thiazole + ADP + H(+). Its pathway is cofactor biosynthesis; thiamine diphosphate biosynthesis; 4-methyl-5-(2-phosphoethyl)-thiazole from 5-(2-hydroxyethyl)-4-methylthiazole: step 1/1. In terms of biological role, catalyzes the phosphorylation of the hydroxyl group of 4-methyl-5-beta-hydroxyethylthiazole (THZ). This is Hydroxyethylthiazole kinase from Brachyspira hyodysenteriae (strain ATCC 49526 / WA1).